The primary structure comprises 114 residues: Peroxisomal biogenesis factor 39 (114 aa).

Disordered stretches follow at residues 1-26 (MSWW…AEPA) and 53-114 (ITAT…PRVS). At S102 the chain carries Phosphoserine.

The protein resides in the peroxisome. Functionally, may be a peroxin involved in the PTS2-mediated protein import pathway. The sequence is that of Peroxisomal biogenesis factor 39 (Pex39) from Mus musculus (Mouse).